A 286-amino-acid polypeptide reads, in one-letter code: 4-hydroxybenzoate octaprenyltransferase (286 aa).

Transmembrane regions (helical) follow at residues Ile-20 to Met-40, Leu-43 to Ile-63, Ile-95 to Val-115, Phe-142 to Val-162, Trp-167 to Val-187, Gln-210 to Ala-230, and Leu-234 to Ile-254.

It belongs to the UbiA prenyltransferase family. It depends on Mg(2+) as a cofactor.

It is found in the cell inner membrane. It carries out the reaction all-trans-octaprenyl diphosphate + 4-hydroxybenzoate = 4-hydroxy-3-(all-trans-octaprenyl)benzoate + diphosphate. The protein operates within cofactor biosynthesis; ubiquinone biosynthesis. In terms of biological role, catalyzes the prenylation of para-hydroxybenzoate (PHB) with an all-trans polyprenyl group. Mediates the second step in the final reaction sequence of ubiquinone-8 (UQ-8) biosynthesis, which is the condensation of the polyisoprenoid side chain with PHB, generating the first membrane-bound Q intermediate 3-octaprenyl-4-hydroxybenzoate. This is 4-hydroxybenzoate octaprenyltransferase from Shewanella sediminis (strain HAW-EB3).